We begin with the raw amino-acid sequence, 483 residues long: MKFIVKPHPEIFVKSESVRKRFTKILESNIRIIVKARTQGVAVFNRRDHIEVTSNSDTYYAEVLEILTTTPGIQQVLEVQQSSFTDLHNIYEQVLELNRANLENKTFVVRAKRRGKHDFTSIELERYVGGGLNQAIASAKVKLINPDVTVQVEVVDELLNQVIARHKGLGGFPLGTQEDVLSLISGGFDSGVSSYLHIKRGSKVHYCFFNLGGPAHEIGVKQTAYYLWQKYGSSAKVRFIAIDFAPVVAEILEKIDDGQMGVVLKRMFMRTAGMVAEKFGIQALVTGEALGQVSSQTLTNLRHIDNVTDTLILRPLINWDKEDIIRLAREIGTEDFAKTMPEFCGVISKSPTVKAVKEKLEEEEAKFDFALLDQVVYNARQIDIRDIGKESLEKAPEVELVNSAEEGNAVVLDIRSPDEEDESPLEIVGVEVKHLPFYKLATQFGDLDQSKTYLLYCSRGVMSRLQALYLQEQGFNNVKVYRP.

One can recognise a THUMP domain in the interval alanine 61–arginine 165. ATP-binding positions include leucine 183–isoleucine 184, lysine 265, glycine 287, and glutamine 296. Residues cysteine 344 and cysteine 457 are joined by a disulfide bond. The 79-residue stretch at glutamate 405–proline 483 folds into the Rhodanese domain. Cysteine 457 (cysteine persulfide intermediate) is an active-site residue.

Belongs to the ThiI family.

It localises to the cytoplasm. It catalyses the reaction [ThiI sulfur-carrier protein]-S-sulfanyl-L-cysteine + a uridine in tRNA + 2 reduced [2Fe-2S]-[ferredoxin] + ATP + H(+) = [ThiI sulfur-carrier protein]-L-cysteine + a 4-thiouridine in tRNA + 2 oxidized [2Fe-2S]-[ferredoxin] + AMP + diphosphate. It carries out the reaction [ThiS sulfur-carrier protein]-C-terminal Gly-Gly-AMP + S-sulfanyl-L-cysteinyl-[cysteine desulfurase] + AH2 = [ThiS sulfur-carrier protein]-C-terminal-Gly-aminoethanethioate + L-cysteinyl-[cysteine desulfurase] + A + AMP + 2 H(+). The protein operates within cofactor biosynthesis; thiamine diphosphate biosynthesis. In terms of biological role, catalyzes the ATP-dependent transfer of a sulfur to tRNA to produce 4-thiouridine in position 8 of tRNAs, which functions as a near-UV photosensor. Also catalyzes the transfer of sulfur to the sulfur carrier protein ThiS, forming ThiS-thiocarboxylate. This is a step in the synthesis of thiazole, in the thiamine biosynthesis pathway. The sulfur is donated as persulfide by IscS. The sequence is that of tRNA sulfurtransferase from Vibrio cholerae serotype O1 (strain ATCC 39315 / El Tor Inaba N16961).